Reading from the N-terminus, the 332-residue chain is DNA-directed RNA polymerase subunit alpha (332 aa).

The interval 1–244 is alpha N-terminal domain (alpha-NTD); that stretch reads MKKHAKVYYS…AHLNLLADVE (244 aa). The alpha C-terminal domain (alpha-CTD) stretch occupies residues 259-332; the sequence is IKEEPIRRFS…NYKNENKGEN (74 aa).

It belongs to the RNA polymerase alpha chain family. In terms of assembly, homodimer. The RNAP catalytic core consists of 2 alpha, 1 beta, 1 beta' and 1 omega subunit. When a sigma factor is associated with the core the holoenzyme is formed, which can initiate transcription.

It catalyses the reaction RNA(n) + a ribonucleoside 5'-triphosphate = RNA(n+1) + diphosphate. Functionally, DNA-dependent RNA polymerase catalyzes the transcription of DNA into RNA using the four ribonucleoside triphosphates as substrates. The chain is DNA-directed RNA polymerase subunit alpha from Mesomycoplasma hyopneumoniae (strain 7448) (Mycoplasma hyopneumoniae).